A 931-amino-acid chain; its full sequence is GPI ethanolamine phosphate transferase 1 (931 aa).

M1 is a topological domain (cytoplasmic). The helical transmembrane segment at L2–I22 threads the bilayer. At Y23–F442 the chain is on the lumenal side. N-linked (GlcNAc...) asparagine glycans are attached at residues N128, N192, N295, and N350. The chain crosses the membrane as a helical span at residues L443–I463. The Cytoplasmic portion of the chain corresponds to K464 to P480. Residues H481–I501 traverse the membrane as a helical segment. Q502 is a topological domain (lumenal). A helical transmembrane segment spans residues A503–L523. Residues R524–H543 lie on the Cytoplasmic side of the membrane. The helical transmembrane segment at F544–Y564 threads the bilayer. Residue R565 is a topological domain, lumenal. The chain crosses the membrane as a helical span at residues Y566–T586. Residues R587–T591 are Cytoplasmic-facing. The chain crosses the membrane as a helical span at residues F592 to G612. The Lumenal portion of the chain corresponds to R613 to S618. N-linked (GlcNAc...) asparagine glycosylation is present at N616. The helical transmembrane segment at L619–G639 threads the bilayer. Residues K640–E649 lie on the Cytoplasmic side of the membrane. A helical membrane pass occupies residues L650–T670. At H671–Q685 the chain is on the lumenal side. Residues I686 to L706 traverse the membrane as a helical segment. Residues S707–L723 lie on the Cytoplasmic side of the membrane. A helical transmembrane segment spans residues L724–I744. Residues Q745 to R786 are Lumenal-facing. Residues A787–I807 traverse the membrane as a helical segment. Topologically, residues N808–P824 are cytoplasmic. A helical transmembrane segment spans residues F825 to A845. The Lumenal portion of the chain corresponds to F846–K858. The chain crosses the membrane as a helical span at residues G859 to V879. At K880–H894 the chain is on the cytoplasmic side. The chain crosses the membrane as a helical span at residues Y895–L915. The Lumenal portion of the chain corresponds to T916 to M931.

It belongs to the PIGG/PIGN/PIGO family. PIGN subfamily.

It is found in the endoplasmic reticulum membrane. It participates in glycolipid biosynthesis; glycosylphosphatidylinositol-anchor biosynthesis. Ethanolamine phosphate transferase that catalyzes an ethanolamine phosphate (EtNP) transfer from phosphatidylethanolamine (PE) to the 2-OH position of the first alpha-1,4-linked mannose of the alpha-D-Man-(1-&gt;6)-alpha-D-Man-(1-&gt;4)-alpha-D-GlcN-(1-&gt;6)-(1-radyl,2-acyl-sn-glycero-3-phospho)-2-acyl-inositol (also termed H3) intermediate to generate an alpha-D-Man-(1-&gt;6)-2-PEtn-alpha-D-Man-(1-&gt;4)-alpha-D-GlcN-(1-&gt;6)-(1-radyl,2-acyl-sn-glycero-3-phospho)-2-acyl-inositol and participates in the eighth step of the glycosylphosphatidylinositol-anchor biosynthesis. May act as suppressor of replication stress and chromosome missegregation. This is GPI ethanolamine phosphate transferase 1 from Mus musculus (Mouse).